The sequence spans 617 residues: DNA-(apurinic or apyrimidinic site) endonuclease (617 aa).

The tract at residues 74-99 is disordered; the sequence is IKNSDEQNNSNNNNNNSSSSNFCSNN. The span at 81–99 shows a compositional bias: low complexity; that stretch reads NNSNNNNNNSSSSNFCSNN. The Mg(2+) site is built by Asn284 and Glu317. Residues 326 to 349 are disordered; sequence SEPCDNKNKNKNKNDGIRDRGKIK. Residues 329–349 show a composition bias toward basic and acidic residues; that stretch reads CDNKNKNKNKNDGIRDRGKIK. Residues Asp474, Asn476, Asp606, and His607 each contribute to the Mg(2+) site. His607 (proton acceptor) is an active-site residue.

It belongs to the DNA repair enzymes AP/ExoA family. Mg(2+) serves as cofactor. Requires Mn(2+) as cofactor. Post-translationally, may be proteolytically cleaved into a 64 kDa form.

It localises to the mitochondrion. It carries out the reaction Exonucleolytic cleavage in the 3'- to 5'-direction to yield nucleoside 5'-phosphates.. Apurinic/apyrimidinic (AP) endonuclease activity is maximal at low Mg(2+) (0.5-2 mM) with no activity seen at high concentrations (more than 10 mM). 3'-5' exonuclease activity is maximal in the range of 0.5-2 mM Mg(2+) with activity seen up to 10 mM Mg(2+). Functionally, multifunctional protein that plays a central role in mitochondrial DNA base excision repair (BER) pathway induced by oxidative stress. Has apurinic/apyrimidinic (AP) endonuclease activity towards double-stranded DNA (dsDNA). Has nucleotide incision repair (NIR) activity; acts on dsDNA with oxidized bases thymine glycol and 5,6-dihydro-2'-deoxyuridine. Has 3'-5' exonuclease; can use dsDNA templates with 3'-OH termini including blunt-end, gapped and mismatched 3'-recessed. Has 3'-phosphatase activity; cleaves 3'-phosphate from blunt, recessed and gapped dsDNA templates, followed by 3'-5' exonuclease activity. Has RNase H-like activity; cleaves RNA on 3'-recessed RNA-DNA duplex. Plays a role in merosome infection of host erythrocytes. This is DNA-(apurinic or apyrimidinic site) endonuclease from Plasmodium falciparum (isolate 3D7).